Here is a 24-residue protein sequence, read N- to C-terminus: MATRGFSCLLLVISEIDLSVKRWV.

This sequence belongs to the humanin family.

It localises to the secreted. The protein resides in the cytoplasm. Its function is as follows. Plays a role as a neuroprotective and antiapoptotic factor. This is Humanin-like 11 from Homo sapiens (Human).